Consider the following 556-residue polypeptide: Potassium-transporting ATPase potassium-binding subunit (556 aa).

10 helical membrane passes run 6–26, 65–85, 133–153, 176–196, 249–269, 283–303, 378–398, 419–439, 483–503, and 526–546; these read AGIL…VPLG, SVLA…LLQG, GLSV…MAFV, LRIL…GGVI, PTTW…FSLP, AAIL…MMLF, GLYS…LMVG, YFLV…ALPG, ALGL…LALA, and FVGM…LPVL.

The protein belongs to the KdpA family. The system is composed of three essential subunits: KdpA, KdpB and KdpC.

It localises to the cell membrane. In terms of biological role, part of the high-affinity ATP-driven potassium transport (or Kdp) system, which catalyzes the hydrolysis of ATP coupled with the electrogenic transport of potassium into the cytoplasm. This subunit binds the extracellular potassium ions and delivers the ions to the membrane domain of KdpB through an intramembrane tunnel. The chain is Potassium-transporting ATPase potassium-binding subunit from Mycobacterium sp. (strain KMS).